Here is a 972-residue protein sequence, read N- to C-terminus: Serine/threonine-protein kinase ATG1 (972 aa).

Positions 18–319 (YVVEKEIGRG…FTEFFSNGLV (302 aa)) constitute a Protein kinase domain. ATP contacts are provided by residues 24–32 (IGRGSFAVV) and Lys-48. The active-site Proton acceptor is the Asp-166. 5 disordered regions span residues 359-394 (KRAS…QSDQ), 424-444 (YNNQ…SNGR), 467-506 (ALQS…HRTT), 562-605 (ASQA…SRRP), and 743-764 (DDEE…NSSG). The segment covering 424 to 436 (YNNQEERSNEERQ) has biased composition (basic and acidic residues). The segment covering 562-584 (ASQALQMARHSSTSVSAANTAKQ) has biased composition (polar residues). The span at 585–605 (TLLRRNSRTLSSSGASTSRRP) shows a compositional bias: low complexity. Residues 750–759 (EHSPGAETYR) are compositionally biased toward basic and acidic residues.

The protein belongs to the protein kinase superfamily. Ser/Thr protein kinase family. APG1/unc-51/ULK1 subfamily. As to quaternary structure, homodimer. Forms a ternary complex with ATG13 and ATG17.

The protein resides in the cytoplasm. It is found in the preautophagosomal structure membrane. The enzyme catalyses L-seryl-[protein] + ATP = O-phospho-L-seryl-[protein] + ADP + H(+). The catalysed reaction is L-threonyl-[protein] + ATP = O-phospho-L-threonyl-[protein] + ADP + H(+). Serine/threonine protein kinase involved in the cytoplasm to vacuole transport (Cvt) and found to be essential in autophagy, where it is required for the formation of autophagosomes. Involved in the clearance of protein aggregates which cannot be efficiently cleared by the proteasome. Required for selective autophagic degradation of the nucleus (nucleophagy) as well as for mitophagy which contributes to regulate mitochondrial quantity and quality by eliminating the mitochondria to a basal level to fulfill cellular energy requirements and preventing excess ROS production. Also involved in endoplasmic reticulum-specific autophagic process, in selective removal of ER-associated degradation (ERAD) substrates. Plays a key role in ATG9 and ATG23 cycling through the pre-autophagosomal structure and is necessary to promote ATG18 binding to ATG9 through phosphorylation of ATG9. Catalyzes phosphorylation of ATG4, decreasing the interaction between ATG4 and ATG8 and impairing deconjugation of PE-conjugated forms of ATG8. This chain is Serine/threonine-protein kinase ATG1, found in Eremothecium gossypii (strain ATCC 10895 / CBS 109.51 / FGSC 9923 / NRRL Y-1056) (Yeast).